A 294-amino-acid polypeptide reads, in one-letter code: Taste receptor type 2 member 143 (294 aa).

The Extracellular segment spans residues M1–L7. The chain crosses the membrane as a helical span at residues I8 to I28. Over I29 to A43 the chain is Cytoplasmic. The helical transmembrane segment at V44–L64 threads the bilayer. The Extracellular segment spans residues N65–V80. A helical membrane pass occupies residues G81–F101. The Cytoplasmic segment spans residues Y102 to L128. Residues L129–I149 traverse the membrane as a helical segment. The Extracellular portion of the chain corresponds to A150–H180. N-linked (GlcNAc...) asparagine glycosylation is present at N162. A helical membrane pass occupies residues A181–F201. Over S202–M227 the chain is Cytoplasmic. A helical membrane pass occupies residues A228–I248. Over S249 to W260 the chain is Extracellular. The chain crosses the membrane as a helical span at residues Y261–L281. The Cytoplasmic segment spans residues S282–F294.

Belongs to the G-protein coupled receptor T2R family.

Its subcellular location is the membrane. In terms of biological role, putative taste receptor which may play a role in the perception of bitterness. In Rattus norvegicus (Rat), this protein is Taste receptor type 2 member 143.